We begin with the raw amino-acid sequence, 102 residues long: Large ribosomal subunit protein uL24 (102 aa).

This sequence belongs to the universal ribosomal protein uL24 family. Part of the 50S ribosomal subunit.

Functionally, one of two assembly initiator proteins, it binds directly to the 5'-end of the 23S rRNA, where it nucleates assembly of the 50S subunit. Its function is as follows. One of the proteins that surrounds the polypeptide exit tunnel on the outside of the subunit. This chain is Large ribosomal subunit protein uL24, found in Ralstonia pickettii (strain 12J).